The following is a 296-amino-acid chain: N-acetylmuramic acid 6-phosphate etherase 2 (296 aa).

The 164-residue stretch at 55–218 folds into the SIS domain; it reads IIKSFNQGGR…STISMIGIGK (164 aa). Glu-83 functions as the Proton donor in the catalytic mechanism. Residue Glu-114 is part of the active site.

The protein belongs to the GCKR-like family. MurNAc-6-P etherase subfamily. As to quaternary structure, homodimer.

It carries out the reaction N-acetyl-D-muramate 6-phosphate + H2O = N-acetyl-D-glucosamine 6-phosphate + (R)-lactate. It participates in amino-sugar metabolism; N-acetylmuramate degradation. Specifically catalyzes the cleavage of the D-lactyl ether substituent of MurNAc 6-phosphate, producing GlcNAc 6-phosphate and D-lactate. This Enterococcus faecalis (strain ATCC 700802 / V583) protein is N-acetylmuramic acid 6-phosphate etherase 2.